We begin with the raw amino-acid sequence, 541 residues long: Testis-specific chromodomain protein Y 2 (541 aa).

Positions 6–66 (FEVEAIVDKR…RQTEKQKKLT (61 aa)) constitute a Chromo domain. The disordered stretch occupies residues 72-104 (RIFSNNARRRTSRSTKANYSKNSPKTPVTDKHH). Polar residues predominate over residues 87–97 (KANYSKNSPKT).

As to expression, testis specific.

It is found in the nucleus. It catalyses the reaction L-lysyl-[protein] + acetyl-CoA = N(6)-acetyl-L-lysyl-[protein] + CoA + H(+). In terms of biological role, may have histone acetyltransferase activity. The chain is Testis-specific chromodomain protein Y 2 (CDY2A) from Homo sapiens (Human).